Consider the following 270-residue polypeptide: Glutamate 5-kinase (270 aa).

Lys17 is an ATP binding site. 3 residues coordinate substrate: Ser57, Asp144, and Asn160. ATP-binding positions include 180 to 181 and 222 to 228; these read SD and TGGMTSK.

This sequence belongs to the glutamate 5-kinase family.

The protein localises to the cytoplasm. It carries out the reaction L-glutamate + ATP = L-glutamyl 5-phosphate + ADP. Its pathway is amino-acid biosynthesis; L-proline biosynthesis; L-glutamate 5-semialdehyde from L-glutamate: step 1/2. Functionally, catalyzes the transfer of a phosphate group to glutamate to form L-glutamate 5-phosphate. In Lactococcus lactis subsp. cremoris (strain SK11), this protein is Glutamate 5-kinase.